A 212-amino-acid chain; its full sequence is Large ribosomal subunit protein uL3 (212 aa).

An N5-methylglutamine modification is found at Gln-153.

The protein belongs to the universal ribosomal protein uL3 family. In terms of assembly, part of the 50S ribosomal subunit. Forms a cluster with proteins L14 and L19. Post-translationally, methylated by PrmB.

One of the primary rRNA binding proteins, it binds directly near the 3'-end of the 23S rRNA, where it nucleates assembly of the 50S subunit. In Shewanella denitrificans (strain OS217 / ATCC BAA-1090 / DSM 15013), this protein is Large ribosomal subunit protein uL3.